A 500-amino-acid polypeptide reads, in one-letter code: L-arabinose isomerase (500 aa).

Mn(2+)-binding residues include glutamate 306, glutamate 333, histidine 350, and histidine 450.

Belongs to the arabinose isomerase family. Homohexamer. Mn(2+) serves as cofactor.

It carries out the reaction beta-L-arabinopyranose = L-ribulose. Its pathway is carbohydrate degradation; L-arabinose degradation via L-ribulose; D-xylulose 5-phosphate from L-arabinose (bacterial route): step 1/3. Its function is as follows. Catalyzes the conversion of L-arabinose to L-ribulose. The chain is L-arabinose isomerase from Yersinia pseudotuberculosis serotype I (strain IP32953).